The primary structure comprises 469 residues: tRNA-2-methylthio-N(6)-dimethylallyladenosine synthase (469 aa).

In terms of domain architecture, MTTase N-terminal spans 22-142 (RKVFIKTYGC…LPEALRRAQQ (121 aa)). The [4Fe-4S] cluster site is built by Cys-31, Cys-67, Cys-105, Cys-183, Cys-187, and Cys-190. A Radical SAM core domain is found at 169–401 (RARGVTAFLT…QALLLKQQQE (233 aa)). The region spanning 404 to 466 (ESCIGKEIDL…TNSLFAERAE (63 aa)) is the TRAM domain.

It belongs to the methylthiotransferase family. MiaB subfamily. In terms of assembly, monomer. It depends on [4Fe-4S] cluster as a cofactor.

The protein localises to the cytoplasm. The catalysed reaction is N(6)-dimethylallyladenosine(37) in tRNA + (sulfur carrier)-SH + AH2 + 2 S-adenosyl-L-methionine = 2-methylsulfanyl-N(6)-dimethylallyladenosine(37) in tRNA + (sulfur carrier)-H + 5'-deoxyadenosine + L-methionine + A + S-adenosyl-L-homocysteine + 2 H(+). Catalyzes the methylthiolation of N6-(dimethylallyl)adenosine (i(6)A), leading to the formation of 2-methylthio-N6-(dimethylallyl)adenosine (ms(2)i(6)A) at position 37 in tRNAs that read codons beginning with uridine. The protein is tRNA-2-methylthio-N(6)-dimethylallyladenosine synthase of Rhizobium etli (strain CIAT 652).